The chain runs to 154 residues: Transcriptional repressor NrdR (154 aa).

A zinc finger spans residues 3-34 (CPFCGNDETKVLESRQVEEGTAVRRRRECERC). The ATP-cone domain occupies 49 to 139 (LIVVKKDGRR…VYREFKDVQR (91 aa)).

This sequence belongs to the NrdR family. Zn(2+) serves as cofactor.

Its function is as follows. Negatively regulates transcription of bacterial ribonucleotide reductase nrd genes and operons by binding to NrdR-boxes. The sequence is that of Transcriptional repressor NrdR from Desulfitobacterium hafniense (strain DSM 10664 / DCB-2).